Consider the following 38-residue polypeptide: Cytochrome b6-f complex subunit 5 (38 aa).

A helical membrane pass occupies residues 5–25; the sequence is LLCGIVLGLIPVTLLGLFVAA.

Belongs to the PetG family. In terms of assembly, the 4 large subunits of the cytochrome b6-f complex are cytochrome b6, subunit IV (17 kDa polypeptide, PetD), cytochrome f and the Rieske protein, while the 4 small subunits are PetG, PetL, PetM and PetN. The complex functions as a dimer.

The protein resides in the cellular thylakoid membrane. In terms of biological role, component of the cytochrome b6-f complex, which mediates electron transfer between photosystem II (PSII) and photosystem I (PSI), cyclic electron flow around PSI, and state transitions. PetG is required for either the stability or assembly of the cytochrome b6-f complex. This is Cytochrome b6-f complex subunit 5 from Parasynechococcus marenigrum (strain WH8102).